Here is a 181-residue protein sequence, read N- to C-terminus: Protein Syd (181 aa).

Belongs to the Syd family.

Its subcellular location is the cell inner membrane. Functionally, interacts with the SecY protein in vivo. May bind preferentially to an uncomplexed state of SecY, thus functioning either as a chelating agent for excess SecY in the cell or as a regulatory factor that negatively controls the translocase function. The protein is Protein Syd of Shigella flexneri serotype 5b (strain 8401).